A 250-amino-acid polypeptide reads, in one-letter code: tRNA (guanine-N(1)-)-methyltransferase (250 aa).

S-adenosyl-L-methionine contacts are provided by residues glycine 112 and 132–137 (IGDFVL).

This sequence belongs to the RNA methyltransferase TrmD family. Homodimer.

The protein localises to the cytoplasm. The catalysed reaction is guanosine(37) in tRNA + S-adenosyl-L-methionine = N(1)-methylguanosine(37) in tRNA + S-adenosyl-L-homocysteine + H(+). Functionally, specifically methylates guanosine-37 in various tRNAs. The protein is tRNA (guanine-N(1)-)-methyltransferase of Marinomonas sp. (strain MWYL1).